A 261-amino-acid polypeptide reads, in one-letter code: ATP synthase subunit a (261 aa).

6 helical membrane passes run 45–65 (ITNVTMWMAIAVLVIAAILVL), 107–127 (VMTLFLFVLCGNVLGLLPLSF), 133–153 (MAVTVPLALMVFVGVTALGFM), 162–182 (MFWVTSAPLAIRPVLAVIEVI), 209–229 (IAGFASIVVVSPVVVGAVTAI), and 232–252 (LELLVAVVQAYVFTILTCVYL).

Belongs to the ATPase A chain family. In terms of assembly, F-type ATPases have 2 components, CF(1) - the catalytic core - and CF(0) - the membrane proton channel. CF(1) has five subunits: alpha(3), beta(3), gamma(1), delta(1), epsilon(1). CF(0) has four main subunits: a, b, b' and c.

It localises to the cell inner membrane. In terms of biological role, key component of the proton channel; it plays a direct role in the translocation of protons across the membrane. This chain is ATP synthase subunit a, found in Cereibacter sphaeroides (strain ATCC 17029 / ATH 2.4.9) (Rhodobacter sphaeroides).